The sequence spans 286 residues: Acyl-CoA thioesterase 2 (286 aa).

Active-site charge relay system residues include Asp-204, Thr-228, and Gln-278.

Belongs to the C/M/P thioester hydrolase family. As to quaternary structure, homotetramer.

It catalyses the reaction a fatty acyl-CoA + H2O = a fatty acid + CoA + H(+). In terms of biological role, thioesterase that has relatively broad substrate specificity, hydrolyzing primarily medium- and long-chain acyl-CoA substrates to free fatty acids and CoA. This is Acyl-CoA thioesterase 2 (tesB) from Haemophilus influenzae (strain ATCC 51907 / DSM 11121 / KW20 / Rd).